The chain runs to 116 residues: Large ribosomal subunit protein bL20 (116 aa).

The protein belongs to the bacterial ribosomal protein bL20 family.

In terms of biological role, binds directly to 23S ribosomal RNA and is necessary for the in vitro assembly process of the 50S ribosomal subunit. It is not involved in the protein synthesizing functions of that subunit. This chain is Large ribosomal subunit protein bL20, found in Fusobacterium nucleatum subsp. nucleatum (strain ATCC 25586 / DSM 15643 / BCRC 10681 / CIP 101130 / JCM 8532 / KCTC 2640 / LMG 13131 / VPI 4355).